The chain runs to 178 residues: Large ribosomal subunit protein eL20 (178 aa).

This sequence belongs to the eukaryotic ribosomal protein eL20 family.

The chain is Large ribosomal subunit protein eL20 (RPL18A) from Oryza sativa subsp. japonica (Rice).